A 394-amino-acid chain; its full sequence is Chaperone protein DnaJ (394 aa).

In terms of domain architecture, J spans 6-71 (DYYEVLEVTK…DKRARYDQFG (66 aa)). Residues 152-234 (GVEKKFKLKK…CGGEGIEYGE (83 aa)) form a CR-type zinc finger. Zn(2+)-binding residues include cysteine 165, cysteine 168, cysteine 182, cysteine 185, cysteine 208, cysteine 211, cysteine 222, and cysteine 225. 4 CXXCXGXG motif repeats span residues 165-172 (CSHCHGTG), 182-189 (CPTCKGSG), 208-215 (CPTCNGEG), and 222-229 (CKVCGGEG).

Belongs to the DnaJ family. In terms of assembly, homodimer. It depends on Zn(2+) as a cofactor.

Its subcellular location is the cytoplasm. In terms of biological role, participates actively in the response to hyperosmotic and heat shock by preventing the aggregation of stress-denatured proteins and by disaggregating proteins, also in an autonomous, DnaK-independent fashion. Unfolded proteins bind initially to DnaJ; upon interaction with the DnaJ-bound protein, DnaK hydrolyzes its bound ATP, resulting in the formation of a stable complex. GrpE releases ADP from DnaK; ATP binding to DnaK triggers the release of the substrate protein, thus completing the reaction cycle. Several rounds of ATP-dependent interactions between DnaJ, DnaK and GrpE are required for fully efficient folding. Also involved, together with DnaK and GrpE, in the DNA replication of plasmids through activation of initiation proteins. The sequence is that of Chaperone protein DnaJ from Bacteroides fragilis (strain YCH46).